Here is a 343-residue protein sequence, read N- to C-terminus: E3 ubiquitin-protein ligase SP1 (343 aa).

A helical transmembrane segment spans residues 1-21; that stretch reads MIPWGGVTCCLSAAALYLLGR. Over 22-222 the chain is Chloroplast intermembrane; that stretch reads SSGRDAEVLE…LISNLGKWSR (201 aa). Residues 223-244 form a helical membrane-spanning segment; it reads LYKYASMGFTVLGVFLITKHVI. At 245–343 the chain is on the cytoplasmic side; it reads DSVLERRRRR…IDLAVKTYRH (99 aa). The RING-type zinc-finger motif lies at 296-331; sequence CVICLEQEYNAVFVPCGHMCCCTACSSHLTSCPLCR.

Interacts with TOC33, TOC75-3 and TOC159. In terms of processing, auto-ubiquitinated.

It localises to the plastid. Its subcellular location is the chloroplast outer membrane. The enzyme catalyses S-ubiquitinyl-[E2 ubiquitin-conjugating enzyme]-L-cysteine + [acceptor protein]-L-lysine = [E2 ubiquitin-conjugating enzyme]-L-cysteine + N(6)-ubiquitinyl-[acceptor protein]-L-lysine.. It functions in the pathway protein modification; protein ubiquitination. Its function is as follows. E3 ubiquitin-protein ligase involved in the regulation of protein import in the chloroplast. Associates with TOC complexes and mediates ubiquitination of TOC components, promoting their degradation via the ubiquitin-proteasome system (UPS). Plays a role in the reorganization of the TOC machinery. Involved in a mechanism that regulates plastid biogenesis via UPS. Promotes stress tolerance by depleting the chloroplast protein import apparatus, which limits photosystem assembly and the potential for reactive oxygen species (ROS) formation. May act as negative regulator of programmed cell death (PCD) during biotic stress. This Arabidopsis thaliana (Mouse-ear cress) protein is E3 ubiquitin-protein ligase SP1.